Reading from the N-terminus, the 563-residue chain is Eukaryotic translation initiation factor 3 subunit D-1 (563 aa).

Positions 98-167 are disordered; it reads VQKPPHQRGR…GPPPKMRESS (70 aa). Positions 100–121 are enriched in basic residues; sequence KPPHQRGRFRNMRNSRSGRGRN. Position 128 is a phosphothreonine (threonine 128). The segment at 291 to 305 is RNA gate; it reads EFDLLTVNETSVEPP.

Belongs to the eIF-3 subunit D family. Component of the eukaryotic translation initiation factor 3 (eIF-3) complex. The eIF-3 complex interacts with pix.

It is found in the cytoplasm. Its function is as follows. mRNA cap-binding component of the eukaryotic translation initiation factor 3 (eIF-3) complex, which is involved in protein synthesis of a specialized repertoire of mRNAs and, together with other initiation factors, stimulates binding of mRNA and methionyl-tRNAi to the 40S ribosome. The eIF-3 complex specifically targets and initiates translation of a subset of mRNAs involved in cell proliferation. In the eIF-3 complex, eif3d specifically recognizes and binds the 7-methylguanosine cap of a subset of mRNAs. This is Eukaryotic translation initiation factor 3 subunit D-1 from Drosophila mojavensis (Fruit fly).